The sequence spans 279 residues: Thymidylate synthase (279 aa).

141–142 (RR) provides a ligand contact to dUMP. The active-site Nucleophile is Cys-161. DUMP is bound by residues 181 to 184 (RSND), Asn-192, and 222 to 224 (HVY). (6R)-5,10-methylene-5,6,7,8-tetrahydrofolate is bound at residue Asp-184. Position 278 (Ala-278) interacts with (6R)-5,10-methylene-5,6,7,8-tetrahydrofolate.

This sequence belongs to the thymidylate synthase family. Bacterial-type ThyA subfamily. In terms of assembly, homodimer.

The protein localises to the cytoplasm. It catalyses the reaction dUMP + (6R)-5,10-methylene-5,6,7,8-tetrahydrofolate = 7,8-dihydrofolate + dTMP. The protein operates within pyrimidine metabolism; dTTP biosynthesis. Catalyzes the reductive methylation of 2'-deoxyuridine-5'-monophosphate (dUMP) to 2'-deoxythymidine-5'-monophosphate (dTMP) while utilizing 5,10-methylenetetrahydrofolate (mTHF) as the methyl donor and reductant in the reaction, yielding dihydrofolate (DHF) as a by-product. This enzymatic reaction provides an intracellular de novo source of dTMP, an essential precursor for DNA biosynthesis. The protein is Thymidylate synthase of Bacillus subtilis subsp. natto.